Reading from the N-terminus, the 453-residue chain is Plasmepsin II (453 aa).

Residues Met-1–Lys-37 are Cytoplasmic-facing. A propeptide spanning residues Met-1–Gly-124 is cleaved from the precursor. Residues Gly-38–Val-58 form a helical; Signal-anchor for type II membrane protein membrane-spanning segment. At Tyr-59 to Leu-453 the chain is on the lumenal side. Residues Phe-140–Ala-447 form the Peptidase A1 domain. Residue Asp-158 is part of the active site. Cysteines 171 and 176 form a disulfide. Asp-338 is an active-site residue. A disulfide bridge connects residues Cys-373 and Cys-409.

This sequence belongs to the peptidase A1 family. In terms of assembly, component of the hemozoin formation complex (HFC) composed of falcipains FP2A and/or FP2B, plasmepsins PMII, PMIII/HAP and PMIV, heme detoxifying protein HDP and falcilysin FLN. The HFC complex is involved in hemoglobin degradation and detoxification of heme in the food vacuole during the asexual blood stage. In terms of processing, not N-glycosylated. Proteolytically cleaved into the soluble active mature form in the digestive vacuole by cysteine protease falcipains; the process begins at the early ring stage. Proteolysis requires an acidic environment. In absence of falcipains, autoprocessing may serve as an alternate activation system.

It is found in the membrane. The protein localises to the vacuole lumen. It localises to the vacuole membrane. The catalysed reaction is Hydrolysis of the bonds linking certain hydrophobic residues in hemoglobin or globin. Also cleaves small molecules substrates such as Ala-Leu-Glu-Arg-Thr-Phe-|-Phe(NO2)-Ser-Phe-Pro-Thr.. With respect to regulation, inhibited by pepstatin A. Inhibited by KNI derived compounds (KNI-10742, 10743, 10395, 10333, and 10343). During the asexual blood stage, participates in initial cleavage of native host hemoglobin (Hb) resulting in Hb denaturation. May cleave preferentially denatured hemoglobin that has been cleaved by PMI. Digestion of host Hb is an essential step which provides the parasite with amino acids for protein synthesis, and regulates osmolarity. The polypeptide is Plasmepsin II (Plasmodium falciparum (isolate 3D7)).